Consider the following 211-residue polypeptide: Rho-related GTP-binding protein RhoF (211 aa).

Met1 is modified (N-acetylmethionine). 26–33 (GDGGCGKT) contributes to the GTP binding site. Residues 48–56 (YAPSVFEKY) carry the Effector region motif. GTP is bound by residues 73 to 77 (DTAGQ) and 131 to 134 (CKTD). At Cys208 the chain carries Cysteine methyl ester. Cys208 carries S-geranylgeranyl cysteine lipidation. Positions 209–211 (LLL) are cleaved as a propeptide — removed in mature form.

It belongs to the small GTPase superfamily. Rho family.

It is found in the cell membrane. The protein localises to the cytoplasm. Its subcellular location is the cytoskeleton. Its function is as follows. Plasma membrane-associated small GTPase which cycles between an active GTP-bound and an inactive GDP-bound state. Causes the formation of thin, actin-rich surface projections called filopodia. Functions cooperatively with CDC42 and Rac to generate additional structures, increasing the diversity of actin-based morphology. The chain is Rho-related GTP-binding protein RhoF (RHOF) from Homo sapiens (Human).